We begin with the raw amino-acid sequence, 184 residues long: uncharacterized protein (184 aa).

Residues His146 to Pro177 form a disordered region. Positions Ser150–Ala172 are enriched in polar residues.

This is an uncharacterized protein from Picosynechococcus sp. (strain ATCC 27264 / PCC 7002 / PR-6) (Agmenellum quadruplicatum).